Consider the following 1401-residue polypeptide: Protein dispatched homolog 2 (1401 aa).

Disordered regions lie at residues 1-91 (MDGD…LAPA) and 113-138 (DRAA…GTWK). A helical membrane pass occupies residues 170-190 (VAVLMLCLAVIFLCTLAGLLG). N-linked (GlcNAc...) asparagine glycosylation occurs at N239. Positions 241 to 264 (SSSHNTLRPAPRGSAQESAVRPRR) are disordered. Residues N349 and N465 are each glycosylated (N-linked (GlcNAc...) asparagine). The SSD domain maps to 471–643 (GMDLGLKQEL…LVWLPASAVL (173 aa)). 11 consecutive transmembrane segments (helical) span residues 484–504 (FLVQ…FGMA), 510–530 (LFLT…AFFL), 542–562 (FVNL…TLIF), 589–609 (FGYL…ASYL), 617–637 (CLAL…LVWL), 704–724 (YIWI…AGVS), 964–984 (PAVV…LGTW), 990–1010 (LFSV…LVLL), 1019–1039 (ALFL…YCIS), 1064–1084 (AVGA…TVLL), and 1088–1108 (LGII…FFFQ). Disordered stretches follow at residues 1169 to 1192 (ARRR…PSVL), 1229 to 1337 (PALQ…NGKR), and 1352 to 1401 (SLPA…GYSS). The span at 1175–1184 (SFDTSTATSK) shows a compositional bias: polar residues. The segment covering 1259 to 1270 (PLPASPEAPAHS) has biased composition (low complexity). Residues 1284 to 1305 (SSASTLEGLSVSDETCLSTSEP) show a composition bias toward polar residues. The segment covering 1352–1362 (SLPASHHSSLS) has biased composition (low complexity). R1366 is subject to Omega-N-methylarginine.

Belongs to the dispatched family.

It localises to the membrane. This Homo sapiens (Human) protein is Protein dispatched homolog 2.